We begin with the raw amino-acid sequence, 1841 residues long: MASSSLPTLVPPGPHCLRPFTPESLAAIEQRAMEEEARLQRNKQMEIEEPERKPRSDLEAGKNLPLIYGDPPPEVIGVPLEDLDPYYSDKKTFIVLNKGKAIFRFSATPALYMLSPFSIVRRVAIKVLIHALFSMFIMITILTNCVFMTMSNPPSWSKDVEYTFTGIYTFESLIKMLARGFCIDDFTFLRDPWNWLDFSVITMAYVTEFVDLGNISALRTFRVLRALKTITVIPGLKTIVGALIQSVKKLSDVMILTVFCLSVFALVGLQLFMGNLRQKCVRWPPPMNDTNTTWYGNDTWYGNDTWYGNDTWYGNDTWNSQESWVSNSTFDWEAYINDEGNFYFLEGSNDALLCGNSSDAGHCPEGYECMKAGRNPNYGYTSYDTFSWAFLALFRLMTQDYWENLFQLTLRAAGKTYMIFFVVIIFLGSFYLINLILAVVAMAYAEQNEATLAEDQEKEEEFQQMLEKFKKHQEELEKAKAAQALEGGEEADGDPTHSKDCNGSLDTSGEKGPPRPSCSAESAISDAMEELEEAHQKCPPWWYKCAHKVLIWNCCAPWVKFKHIILLIVMDPFVDLGITICIVLNTLFMAMEHYPMTEHFDNVLSVGNLVFTGIFTAEMVLKLIAMDPYEYFQQGWNIFDSFIVTLSLVELGLANVQGLSVLRSFRLLRVFKLAKSWPTLNMLIKIIGNSVGALGNLTLVLAIIVFIFAVVGMQLFGKSYKECVCKIASDCSLPRWHMHDFFHSFLIVFRILCGEWIETMWDCMEVAGQAMCLTVFLMVMVIGNLVVLNLFLALLLSSFSADSLAASDEDGEMNNLQIAIGRIKWGIAFAKTFLLGLLHGKILSLKDIMLSLGEPGGAGENGESPPEDEKKEPPPEDGNKELKDNHILNHVGLTDGPRSSIEMDHLNFINNPYLTIHVPIASEESDLEMPTEEETDTFSEPEDIKKPLQPLYDGNSSVCSTADYKPPEEDPEEQAEENPEGELPEECFTEACVKRCPCLYVDISQGRGKMWWTLRRACFKIVEHNWFETFIVFMILLSSGALAFEDIYIEQRRVIRTILEYADKVFTYIFILEMLLKWVAYGFKVYFTNAWCWLDFLIVDVSIISLVANWLGYSELGPIKSLRTLRALRPLRALSRFEGMRVVVNALLGAIPSIMNVLLVCLIFWLIFSIMGVNLFAGKFYYCINTTTSERFDISVVNNKSECESLMYTGQVRWMNVKVNYDNVGLGYLSLLQVATFKGWMDIMYAAVDSREKEEQPDYEVNLYMYLYFVIFIIFGSFFTLNLFIGVIIDNFNQQKKKFGGKDIFMTEEQKKYYNAMKKLGSKKPQKPIPRPQNKIQGMVYDFVTKQVFDISIMILICLNMVTMMVETDDQSQLKVDILYNINMVFIIVFTGECVLKMFALRHYYFTIGWNIFDFVVVILSIVGLALSDLIQKYFVSPTLFRVIRLARIGRVLRLIRGAKGIRTLLFALMMSLPALFNIGLLLFLVMFIYSIFGMSNFAYVKKESGIDDMFNFETFGNSIICLFEITTSAGWDGLLNPILNSGPPDCDPTLENPGTNIKGDCGNPSIGICFFCSYIIISFLIVVNMYIAIILENFNVATEESSEPLCEDDFEMFYETWEKFDPDATQFIDYSRLSDFVDTLQEPLKIAKPNKIKLITLDLPMVPGDKIHCLDILFALTKEVLGDSGEMDALKQTMEEKFMAANPSKVSYEPITTTLKRKQEEVCAIKIQRAYRRHLLQRSVKQASYMYRHSQEGNGDGAPEKEGLLANTMNKMYGSEKEDNGVQSQGEKEKDSTEDAGPTTEVTAPSSSDTALTPPPPSPPPPSSPPQGQTVRPGVKESLV.

Residues 1 to 131 (MASSSLPTLV…RVAIKVLIHA (131 aa)) lie on the Cytoplasmic side of the membrane. The segment covering 32–60 (AMEEEARLQRNKQMEIEEPERKPRSDLEA) has biased composition (basic and acidic residues). The tract at residues 32-63 (AMEEEARLQRNKQMEIEEPERKPRSDLEAGKN) is disordered. The I repeat unit spans residues 113-448 (MLSPFSIVRR…VVAMAYAEQN (336 aa)). Residues 132–150 (LFSMFIMITILTNCVFMTM) traverse the membrane as a helical segment. At 151 to 157 (SNPPSWS) the chain is on the extracellular side. The helical transmembrane segment at 158–178 (KDVEYTFTGIYTFESLIKMLA) threads the bilayer. The Cytoplasmic segment spans residues 179 to 192 (RGFCIDDFTFLRDP). Residues 193–210 (WNWLDFSVITMAYVTEFV) traverse the membrane as a helical segment. Topologically, residues 211–216 (DLGNIS) are extracellular. An N-linked (GlcNAc...) asparagine glycan is attached at Asn-214. A helical membrane pass occupies residues 217–233 (ALRTFRVLRALKTITVI). At 234-252 (PGLKTIVGALIQSVKKLSD) the chain is on the cytoplasmic side. Residues 253–272 (VMILTVFCLSVFALVGLQLF) form a helical membrane-spanning segment. At 273 to 385 (MGNLRQKCVR…PNYGYTSYDT (113 aa)) the chain is on the extracellular side. The cysteines at positions 280 and 354 are disulfide-linked. Residues Asn-288, Asn-291, Asn-297, Asn-303, Asn-315, Asn-327, and Asn-356 are each glycosylated (N-linked (GlcNAc...) asparagine). Residues Cys-363 and Cys-369 are joined by a disulfide bond. The segment at residues 386–410 (FSWAFLALFRLMTQDYWENLFQLTL) is an intramembrane region (pore-forming). Over 411–417 (RAAGKTY) the chain is Extracellular. Residues 418-438 (MIFFVVIIFLGSFYLINLILA) traverse the membrane as a helical segment. Topologically, residues 439 to 572 (VVAMAYAEQN…HIILLIVMDP (134 aa)) are cytoplasmic. Positions 484-522 (ALEGGEEADGDPTHSKDCNGSLDTSGEKGPPRPSCSAES) are disordered. An II repeat occupies 554–826 (CCAPWVKFKH…QIAIGRIKWG (273 aa)). The chain crosses the membrane as a helical span at residues 573-591 (FVDLGITICIVLNTLFMAM). Over 592 to 602 (EHYPMTEHFDN) the chain is Extracellular. Residues 603-622 (VLSVGNLVFTGIFTAEMVLK) form a helical membrane-spanning segment. Topologically, residues 623–636 (LIAMDPYEYFQQGW) are cytoplasmic. The chain crosses the membrane as a helical span at residues 637–656 (NIFDSFIVTLSLVELGLANV). Topologically, residues 657-658 (QG) are extracellular. A helical membrane pass occupies residues 659–676 (LSVLRSFRLLRVFKLAKS). Topologically, residues 677–692 (WPTLNMLIKIIGNSVG) are cytoplasmic. A helical membrane pass occupies residues 693-711 (ALGNLTLVLAIIVFIFAVV). Over 712–740 (GMQLFGKSYKECVCKIASDCSLPRWHMHD) the chain is Extracellular. A disulfide bridge connects residues Cys-725 and Cys-731. The segment at residues 741-761 (FFHSFLIVFRILCGEWIETMW) is an intramembrane region (pore-forming). The Extracellular portion of the chain corresponds to 762 to 772 (DCMEVAGQAMC). A disulfide bridge links Cys-763 with Cys-772. The helical transmembrane segment at 773–791 (LTVFLMVMVIGNLVVLNLF) threads the bilayer. Over 792–1026 (LALLLSSFSA…ACFKIVEHNW (235 aa)) the chain is Cytoplasmic. Disordered stretches follow at residues 854-896 (EPGG…LTDG) and 925-983 (SDLE…EGEL). The span at 867 to 887 (EDEKKEPPPEDGNKELKDNHI) shows a compositional bias: basic and acidic residues. Composition is skewed to acidic residues over residues 925–941 (SDLE…FSEP) and 969–983 (EDPE…EGEL). The III repeat unit spans residues 1007-1320 (RGKMWWTLRR…KKYYNAMKKL (314 aa)). A helical transmembrane segment spans residues 1027–1044 (FETFIVFMILLSSGALAF). The Extracellular portion of the chain corresponds to 1045-1057 (EDIYIEQRRVIRT). The chain crosses the membrane as a helical span at residues 1058–1076 (ILEYADKVFTYIFILEMLL). Residues 1077-1090 (KWVAYGFKVYFTNA) lie on the Cytoplasmic side of the membrane. The helical transmembrane segment at 1091 to 1109 (WCWLDFLIVDVSIISLVAN) threads the bilayer. The Extracellular portion of the chain corresponds to 1110–1117 (WLGYSELG). A helical membrane pass occupies residues 1118–1136 (PIKSLRTLRALRPLRALSR). Over 1137 to 1153 (FEGMRVVVNALLGAIPS) the chain is Cytoplasmic. The helical transmembrane segment at 1154 to 1173 (IMNVLLVCLIFWLIFSIMGV) threads the bilayer. The Extracellular portion of the chain corresponds to 1174–1224 (NLFAGKFYYCINTTTSERFDISVVNNKSECESLMYTGQVRWMNVKVNYDNV). Cysteines 1183 and 1203 form a disulfide. N-linked (GlcNAc...) asparagine glycans are attached at residues Asn-1185 and Asn-1199. An intramembrane region (pore-forming) is located at residues 1225 to 1246 (GLGYLSLLQVATFKGWMDIMYA). At 1247–1263 (AVDSREKEEQPDYEVNL) the chain is on the extracellular side. The chain crosses the membrane as a helical span at residues 1264–1285 (YMYLYFVIFIIFGSFFTLNLFI). Residues 1286-1348 (GVIIDNFNQQ…MVYDFVTKQV (63 aa)) are Cytoplasmic-facing. The tract at residues 1304-1306 (IFM) is important for rapid channel inactivation. One copy of the IV repeat lies at 1329 to 1627 (IPRPQNKIQG…WEKFDPDATQ (299 aa)). The helical transmembrane segment at 1349–1366 (FDISIMILICLNMVTMMV) threads the bilayer. The Extracellular segment spans residues 1367 to 1377 (ETDDQSQLKVD). A helical transmembrane segment spans residues 1378–1396 (ILYNINMVFIIVFTGECVL). The Cytoplasmic segment spans residues 1397–1408 (KMFALRHYYFTI). Residues 1409–1426 (GWNIFDFVVVILSIVGLA) traverse the membrane as a helical segment. The Extracellular segment spans residues 1427 to 1439 (LSDLIQKYFVSPT). The helical transmembrane segment at 1440–1456 (LFRVIRLARIGRVLRLI) threads the bilayer. Residues 1457–1475 (RGAKGIRTLLFALMMSLPA) are Cytoplasmic-facing. A helical transmembrane segment spans residues 1476 to 1493 (LFNIGLLLFLVMFIYSIF). At 1494–1515 (GMSNFAYVKKESGIDDMFNFET) the chain is on the extracellular side. Positions 1516-1538 (FGNSIICLFEITTSAGWDGLLNP) form an intramembrane region, pore-forming. The Extracellular segment spans residues 1539 to 1568 (ILNSGPPDCDPTLENPGTNIKGDCGNPSIG). Cys-1547 and Cys-1562 are oxidised to a cystine. The helical transmembrane segment at 1569 to 1591 (ICFFCSYIIISFLIVVNMYIAII) threads the bilayer. At 1592–1841 (LENFNVATEE…VRPGVKESLV (250 aa)) the chain is on the cytoplasmic side. The region spanning 1721-1750 (EEVCAIKIQRAYRRHLLQRSVKQASYMYRH) is the IQ domain. The span at 1776 to 1794 (SEKEDNGVQSQGEKEKDST) shows a compositional bias: basic and acidic residues. A disordered region spans residues 1776–1841 (SEKEDNGVQS…VRPGVKESLV (66 aa)). Polar residues predominate over residues 1801 to 1812 (TEVTAPSSSDTA). Pro residues predominate over residues 1814–1826 (TPPPPSPPPPSSP).

The protein belongs to the sodium channel (TC 1.A.1.10) family. Nav1.4/SCN4A subfamily. As to quaternary structure, the Nav1.4 voltage-gated sodium channel consists of an ion-conducting alpha subunit SCN4A which is functional on its own and a regulatory beta subunit SCN1B. SCN1B strongly enhances the presence of SCN4A at the cell surface. SCN1B is also required for rapid channel inactivation and recovery after inactivation. It prevents the decrease of channel activity in response to repetitive, high-frequency depolarizations. Interacts with the syntrophins SNTA1, SNTB1 and SNTB2 (via PDZ domain); probably links SCN4A to the actin cytoskeleton and the extracellular matrix via the dystrophin-associated protein complex and regulates its localization in muscle cells. Interacts with TMEM233; probable regulator of the channel. As to expression, detected in quadriceps muscle (at protein level). Detected in hind-limb skeletal muscles, but not in heart or brain. Detected at low levels in the myocardium. According to Pubme=26427606 detected also in brain.

The protein resides in the cell membrane. It carries out the reaction Na(+)(in) = Na(+)(out). With respect to regulation, the channel is inhibited by tetrodotoxin. Its function is as follows. Pore-forming subunit of Nav1.4, a voltage-gated sodium (Nav) channel that directly mediates the depolarizing phase of action potentials in excitable membranes. Navs, also called VGSCs (voltage-gated sodium channels) or VDSCs (voltage-dependent sodium channels), operate by switching between closed and open conformations depending on the voltage difference across the membrane. In the open conformation they allow Na(+) ions to selectively pass through the pore, along their electrochemical gradient. The influx of Na+ ions provokes membrane depolarization, initiating the propagation of electrical signals throughout cells and tissues. Highly expressed in skeletal muscles, Nav1.4 generates the action potential crucial for muscle contraction. In Mus musculus (Mouse), this protein is Sodium channel protein type 4 subunit alpha.